The primary structure comprises 121 residues: Phosphoribosyl-ATP pyrophosphatase (121 aa).

It belongs to the PRA-PH family.

It localises to the cytoplasm. The catalysed reaction is 1-(5-phospho-beta-D-ribosyl)-ATP + H2O = 1-(5-phospho-beta-D-ribosyl)-5'-AMP + diphosphate + H(+). Its pathway is amino-acid biosynthesis; L-histidine biosynthesis; L-histidine from 5-phospho-alpha-D-ribose 1-diphosphate: step 2/9. This chain is Phosphoribosyl-ATP pyrophosphatase, found in Nitrosospira multiformis (strain ATCC 25196 / NCIMB 11849 / C 71).